We begin with the raw amino-acid sequence, 172 residues long: Endoribonuclease YbeY (172 aa).

Residues His-124, His-128, and His-134 each coordinate Zn(2+).

This sequence belongs to the endoribonuclease YbeY family. The cofactor is Zn(2+).

It is found in the cytoplasm. In terms of biological role, single strand-specific metallo-endoribonuclease involved in late-stage 70S ribosome quality control and in maturation of the 3' terminus of the 16S rRNA. The chain is Endoribonuclease YbeY from Rhodopseudomonas palustris (strain BisA53).